Consider the following 117-residue polypeptide: Large ribosomal subunit protein uL18 (117 aa).

Belongs to the universal ribosomal protein uL18 family. Part of the 50S ribosomal subunit; part of the 5S rRNA/L5/L18/L25 subcomplex. Contacts the 5S and 23S rRNAs.

This is one of the proteins that bind and probably mediate the attachment of the 5S RNA into the large ribosomal subunit, where it forms part of the central protuberance. The chain is Large ribosomal subunit protein uL18 from Haemophilus influenzae (strain 86-028NP).